Here is a 427-residue protein sequence, read N- to C-terminus: Tyrosine--tRNA ligase (427 aa).

Tyr-39 provides a ligand contact to L-tyrosine. A 'HIGH' region motif is present at residues 44 to 53; that stretch reads PTSDSLHIGH. 2 residues coordinate L-tyrosine: Tyr-178 and Gln-182. The 'KMSKS' region motif lies at 238–242; it reads KFGKT. Lys-241 provides a ligand contact to ATP. An S4 RNA-binding domain is found at 360–417; the sequence is ITLQQALVESKLVVSRAQARELISSNSITVNSKKQLKTEYIFCATDRLYNRFTLLRRG.

Belongs to the class-I aminoacyl-tRNA synthetase family. TyrS type 1 subfamily. Homodimer.

It is found in the cytoplasm. It catalyses the reaction tRNA(Tyr) + L-tyrosine + ATP = L-tyrosyl-tRNA(Tyr) + AMP + diphosphate + H(+). Its function is as follows. Catalyzes the attachment of tyrosine to tRNA(Tyr) in a two-step reaction: tyrosine is first activated by ATP to form Tyr-AMP and then transferred to the acceptor end of tRNA(Tyr). This Blochmanniella pennsylvanica (strain BPEN) protein is Tyrosine--tRNA ligase.